A 105-amino-acid polypeptide reads, in one-letter code: Vacuolar ATPase assembly integral membrane protein VMA21 homolog (105 aa).

The disordered stretch occupies residues 1 to 26 (MSTKNKKAAGGNGGAPKQTRQQSHDS). The Cytoplasmic segment spans residues 1 to 36 (MSTKNKKAAGGNGGAPKQTRQQSHDSQDYSSFKTVL). A helical transmembrane segment spans residues 37–57 (FYCMLIVFLPVLTFFVLKGFV). Residues 58–68 (LDQFLNISEVK) lie on the Lumenal side of the membrane. A helical membrane pass occupies residues 69–89 (VNIASAVGAVVALHIALGLYI). Topologically, residues 90–105 (YRAYFGAPGSKGSKTD) are cytoplasmic.

The protein belongs to the VMA21 family.

Its subcellular location is the endoplasmic reticulum membrane. It localises to the endoplasmic reticulum-Golgi intermediate compartment membrane. It is found in the cytoplasmic vesicle. The protein localises to the COPII-coated vesicle membrane. Its function is as follows. Required for the assembly of the V0 complex of the vacuolar ATPase (V-ATPase) in the endoplasmic reticulum. The sequence is that of Vacuolar ATPase assembly integral membrane protein VMA21 homolog from Drosophila sechellia (Fruit fly).